We begin with the raw amino-acid sequence, 572 residues long: Light-independent protochlorophyllide reductase subunit N (572 aa).

Cys106, Cys131, and Cys191 together coordinate [4Fe-4S] cluster. The disordered stretch occupies residues 249–268 (SLDSMKLPSGGREKQINDVN).

It belongs to the BchN/ChlN family. As to quaternary structure, protochlorophyllide reductase is composed of three subunits; ChlL, ChlN and ChlB. Forms a heterotetramer of two ChlB and two ChlN subunits. [4Fe-4S] cluster serves as cofactor.

Its subcellular location is the plastid. The protein resides in the chloroplast. It carries out the reaction chlorophyllide a + oxidized 2[4Fe-4S]-[ferredoxin] + 2 ADP + 2 phosphate = protochlorophyllide a + reduced 2[4Fe-4S]-[ferredoxin] + 2 ATP + 2 H2O. The protein operates within porphyrin-containing compound metabolism; chlorophyll biosynthesis (light-independent). Component of the dark-operative protochlorophyllide reductase (DPOR) that uses Mg-ATP and reduced ferredoxin to reduce ring D of protochlorophyllide (Pchlide) to form chlorophyllide a (Chlide). This reaction is light-independent. The NB-protein (ChlN-ChlB) is the catalytic component of the complex. The chain is Light-independent protochlorophyllide reductase subunit N from Oltmannsiellopsis viridis (Marine flagellate).